The primary structure comprises 222 residues: Histidine biosynthesis bifunctional protein HisIE (222 aa).

The phosphoribosyl-AMP cyclohydrolase stretch occupies residues 1–128 (MQPLSPAFID…SLTLPPPMDA (128 aa)). Residues 129–222 (CSELFRVIDQ…ANRRGAPRRN (94 aa)) form a phosphoribosyl-ATP pyrophosphohydrolase region.

The protein in the N-terminal section; belongs to the PRA-CH family. In the C-terminal section; belongs to the PRA-PH family.

The protein resides in the cytoplasm. It carries out the reaction 1-(5-phospho-beta-D-ribosyl)-ATP + H2O = 1-(5-phospho-beta-D-ribosyl)-5'-AMP + diphosphate + H(+). The catalysed reaction is 1-(5-phospho-beta-D-ribosyl)-5'-AMP + H2O = 1-(5-phospho-beta-D-ribosyl)-5-[(5-phospho-beta-D-ribosylamino)methylideneamino]imidazole-4-carboxamide. It functions in the pathway amino-acid biosynthesis; L-histidine biosynthesis; L-histidine from 5-phospho-alpha-D-ribose 1-diphosphate: step 2/9. The protein operates within amino-acid biosynthesis; L-histidine biosynthesis; L-histidine from 5-phospho-alpha-D-ribose 1-diphosphate: step 3/9. The sequence is that of Histidine biosynthesis bifunctional protein HisIE from Prochlorococcus marinus (strain MIT 9313).